Reading from the N-terminus, the 223-residue chain is Large ribosomal subunit protein uL4 (223 aa).

Residues 47–72 (GTASTKTRGEVAGGGRKPWPQKHTGR) form a disordered region.

It belongs to the universal ribosomal protein uL4 family. As to quaternary structure, part of the 50S ribosomal subunit.

Its function is as follows. One of the primary rRNA binding proteins, this protein initially binds near the 5'-end of the 23S rRNA. It is important during the early stages of 50S assembly. It makes multiple contacts with different domains of the 23S rRNA in the assembled 50S subunit and ribosome. Forms part of the polypeptide exit tunnel. This is Large ribosomal subunit protein uL4 from Fervidobacterium nodosum (strain ATCC 35602 / DSM 5306 / Rt17-B1).